We begin with the raw amino-acid sequence, 529 residues long: Ribonuclease Y (529 aa).

The chain crosses the membrane as a helical span at residues 4–24; sequence GLIYISLEVLVACLITALIMY. One can recognise a KH domain in the interval 216 to 297; it reads LTTRIALPCS…NRIEEVYHRV (82 aa). The 94-residue stretch at 342 to 435 folds into the HD domain; that stretch reads ALQHSKEVAL…VCAADALSAG (94 aa).

Belongs to the RNase Y family.

The protein localises to the cell membrane. In terms of biological role, endoribonuclease that initiates mRNA decay. The polypeptide is Ribonuclease Y (Helicobacter pylori (strain HPAG1)).